Reading from the N-terminus, the 348-residue chain is Histidinol-phosphate aminotransferase (348 aa).

Lys211 bears the N6-(pyridoxal phosphate)lysine mark.

It belongs to the class-II pyridoxal-phosphate-dependent aminotransferase family. Histidinol-phosphate aminotransferase subfamily. As to quaternary structure, homodimer. The cofactor is pyridoxal 5'-phosphate.

It carries out the reaction L-histidinol phosphate + 2-oxoglutarate = 3-(imidazol-4-yl)-2-oxopropyl phosphate + L-glutamate. It participates in amino-acid biosynthesis; L-histidine biosynthesis; L-histidine from 5-phospho-alpha-D-ribose 1-diphosphate: step 7/9. In Chlorobaculum tepidum (strain ATCC 49652 / DSM 12025 / NBRC 103806 / TLS) (Chlorobium tepidum), this protein is Histidinol-phosphate aminotransferase.